The sequence spans 173 residues: Crossover junction endodeoxyribonuclease RuvC (173 aa).

Residues aspartate 8, glutamate 67, and aspartate 139 contribute to the active site. The Mg(2+) site is built by aspartate 8, glutamate 67, and aspartate 139.

Belongs to the RuvC family. As to quaternary structure, homodimer which binds Holliday junction (HJ) DNA. The HJ becomes 2-fold symmetrical on binding to RuvC with unstacked arms; it has a different conformation from HJ DNA in complex with RuvA. In the full resolvosome a probable DNA-RuvA(4)-RuvB(12)-RuvC(2) complex forms which resolves the HJ. Requires Mg(2+) as cofactor.

The protein resides in the cytoplasm. The enzyme catalyses Endonucleolytic cleavage at a junction such as a reciprocal single-stranded crossover between two homologous DNA duplexes (Holliday junction).. Its function is as follows. The RuvA-RuvB-RuvC complex processes Holliday junction (HJ) DNA during genetic recombination and DNA repair. Endonuclease that resolves HJ intermediates. Cleaves cruciform DNA by making single-stranded nicks across the HJ at symmetrical positions within the homologous arms, yielding a 5'-phosphate and a 3'-hydroxyl group; requires a central core of homology in the junction. The consensus cleavage sequence is 5'-(A/T)TT(C/G)-3'. Cleavage occurs on the 3'-side of the TT dinucleotide at the point of strand exchange. HJ branch migration catalyzed by RuvA-RuvB allows RuvC to scan DNA until it finds its consensus sequence, where it cleaves and resolves the cruciform DNA. In terms of biological role, plays a role in recovery after DNA ADP-ribosylation, probably via replication fork reversal. This chain is Crossover junction endodeoxyribonuclease RuvC, found in Escherichia coli O127:H6 (strain E2348/69 / EPEC).